The chain runs to 187 residues: Ribosome-recycling factor (187 aa).

This sequence belongs to the RRF family.

It is found in the cytoplasm. Its function is as follows. Responsible for the release of ribosomes from messenger RNA at the termination of protein biosynthesis. May increase the efficiency of translation by recycling ribosomes from one round of translation to another. The protein is Ribosome-recycling factor of Ruegeria pomeroyi (strain ATCC 700808 / DSM 15171 / DSS-3) (Silicibacter pomeroyi).